The chain runs to 628 residues: Kinesin-like protein KIN-10B (628 aa).

Residues 20–340 form the Kinesin motor domain; it reads NVRVVLRVRP…VSLAARSRHI (321 aa). Residue 114–121 coordinates ATP; it reads GATGSGKT. The segment at 496-519 is disordered; that stretch reads SPIDSNAKPNSAHGSSPFLKPMTP. Positions 498-509 are enriched in polar residues; that stretch reads IDSNAKPNSAHG.

Belongs to the TRAFAC class myosin-kinesin ATPase superfamily. Kinesin family. KIN-10 subfamily.

The polypeptide is Kinesin-like protein KIN-10B (Arabidopsis thaliana (Mouse-ear cress)).